Here is a 203-residue protein sequence, read N- to C-terminus: Sperm-specific protein PHI-2B/PHI-3 (203 aa).

Basic residues predominate over residues Met1–Arg35. 2 disordered regions span residues Met1–Leu46 and Lys104–Lys203. The region spanning Lys41–Lys120 is the H15 domain. Basic residues-rich tracts occupy residues Lys126–Lys140 and Lys147–Lys203.

PL-II* and PL-IV are produced by post-translational cleavage of a common precursor. Sperm.

It is found in the nucleus. It localises to the chromosome. Functionally, linker histones are implicated in chromatin remodeling and/or transcriptional regulation during spermiogenesis, the process of spermatid maturation into spermatozoa. Protamines substitute for histones in the chromatin of sperm during the haploid phase of spermatogenesis. They compact sperm DNA into a highly condensed, stable and inactive complex. The protein is Sperm-specific protein PHI-2B/PHI-3 of Mytilus trossulus (Blue mussel).